The chain runs to 209 residues: dITP/XTP pyrophosphatase (209 aa).

7 to 12 (SSHGYK) contacts substrate. The active-site Proton acceptor is the D70. Residue D70 participates in Mg(2+) binding. Substrate-binding positions include S71, 154-157 (FGYD), K177, and 182-183 (HR).

This sequence belongs to the HAM1 NTPase family. Homodimer. Mg(2+) is required as a cofactor.

The enzyme catalyses XTP + H2O = XMP + diphosphate + H(+). The catalysed reaction is dITP + H2O = dIMP + diphosphate + H(+). It catalyses the reaction ITP + H2O = IMP + diphosphate + H(+). Its function is as follows. Pyrophosphatase that catalyzes the hydrolysis of nucleoside triphosphates to their monophosphate derivatives, with a high preference for the non-canonical purine nucleotides XTP (xanthosine triphosphate), dITP (deoxyinosine triphosphate) and ITP. Seems to function as a house-cleaning enzyme that removes non-canonical purine nucleotides from the nucleotide pool, thus preventing their incorporation into DNA/RNA and avoiding chromosomal lesions. This Chlamydia muridarum (strain MoPn / Nigg) protein is dITP/XTP pyrophosphatase.